Consider the following 196-residue polypeptide: MQLKRVVEAKLPTPWGDFLMVGFEELATGHDHVALVYGDISGHTPVLARVHSECLTGDALFSLRCDCGFQLEAALTQIAEEGRGILLYHRQEGRNIGLLNKIRAYALQDQGYDTVEANHQLGFAADERDFTLCADMFKLLGVNEVRLLTNNPKKVEILTEAGINIVERVPLIVGRNPNNEHYLDTKAEKMGHLLNK.

Arginine 49–glutamate 53 serves as a coordination point for GTP. Positions 54, 65, and 67 each coordinate Zn(2+). GTP contacts are provided by residues glutamine 70, glutamate 92–arginine 94, and threonine 114. Aspartate 126 (proton acceptor) is an active-site residue. Arginine 128 acts as the Nucleophile in catalysis. Residues threonine 149 and lysine 154 each contribute to the GTP site.

The protein belongs to the GTP cyclohydrolase II family. As to quaternary structure, homodimer. Zn(2+) serves as cofactor.

It carries out the reaction GTP + 4 H2O = 2,5-diamino-6-hydroxy-4-(5-phosphoribosylamino)-pyrimidine + formate + 2 phosphate + 3 H(+). The protein operates within cofactor biosynthesis; riboflavin biosynthesis; 5-amino-6-(D-ribitylamino)uracil from GTP: step 1/4. Catalyzes the conversion of GTP to 2,5-diamino-6-ribosylamino-4(3H)-pyrimidinone 5'-phosphate (DARP), formate and pyrophosphate. This is GTP cyclohydrolase-2 from Shigella dysenteriae serotype 1 (strain Sd197).